The chain runs to 117 residues: Antimicrobial peptide AmAMP1 (117 aa).

A signal peptide spans 1 to 25 (MPSIRVLFVLLAVILLFMEVKMTSA). A propeptide spanning residues 26 to 73 (ASIVKDVDEDETLENEDGEAMENSWPWHGVEDTSDYSDLSDLANSEKR) is cleaved from the precursor. 3 disulfides stabilise this stretch: C76–C115, C85–C108, and C94–C112.

The protein belongs to the coral AMP family.

The protein resides in the secreted. In terms of biological role, coral peptide that probably acts as an antimicrobial peptide in the surface mucous layer of planula larvae and likely also in adults. Shows moderate to high activity against some Gram-negative and Gram-positive bacteria (tested on E.coli, B.megaterium, S.aureus, E.aesturaii, B.algicola, Acinetobacter spec.). Does not show antibacterial activity against the coral pathogen V.coralliilyticus. This is Antimicrobial peptide AmAMP1 from Acropora millepora (Staghorn coral).